Consider the following 382-residue polypeptide: Protein phosphatase 1A (382 aa).

Glycine 2 is lipidated: N-myristoyl glycine. Residues 23 to 291 enclose the PPM-type phosphatase domain; that stretch reads RYGLSSMQGW…DNMSVILICF (269 aa). Mn(2+)-binding residues include aspartate 60, glycine 61, aspartate 239, and aspartate 282. 2 positions are modified to phosphoserine: serine 375 and serine 377.

Belongs to the PP2C family. Monomer. Interacts with SMAD2; the interaction dephosphorylates SMAD2 in its C-terminal SXS motif resulting in disruption of the SMAD2/SMAD4 complex, SMAD2 nuclear export and termination of the TGF-beta-mediated signaling. Interacts with SMAD2; the interaction dephosphorylates SMAD2 in its C-terminal SXS motif resulting in disruption of the SMAD2/SMAD4 complex, SMAD2 nuclear export and termination of the TGF-beta-mediated signaling. Interacts with the phosphorylated form of IKBKB/IKKB. Requires Mg(2+) as cofactor. It depends on Mn(2+) as a cofactor. In terms of processing, N-myristoylation is essential for the recognition of its substrates for dephosphorylation.

The protein localises to the nucleus. Its subcellular location is the cytoplasm. It localises to the cytosol. It is found in the membrane. The catalysed reaction is O-phospho-L-seryl-[protein] + H2O = L-seryl-[protein] + phosphate. The enzyme catalyses O-phospho-L-threonyl-[protein] + H2O = L-threonyl-[protein] + phosphate. Functionally, enzyme with a broad specificity. Negatively regulates TGF-beta signaling through dephosphorylating SMAD2 and SMAD3, resulting in their dissociation from SMAD4, nuclear export of the SMADs and termination of the TGF-beta-mediated signaling. Dephosphorylates PRKAA1 and PRKAA2. Plays an important role in the termination of TNF-alpha-mediated NF-kappa-B activation through dephosphorylating and inactivating IKBKB/IKKB. The chain is Protein phosphatase 1A (Ppm1a) from Mus musculus (Mouse).